A 493-amino-acid chain; its full sequence is D-aminoacyl-tRNA deacylase (493 aa).

Basic and acidic residues predominate over residues D22–A37. 2 disordered regions span residues D22 to Y44 and P441 to E493.

Belongs to the DtdA deacylase family. In terms of assembly, monomer. Requires Zn(2+) as cofactor.

It catalyses the reaction a D-aminoacyl-tRNA + H2O = a tRNA + a D-alpha-amino acid + H(+). The catalysed reaction is glycyl-tRNA(Ala) + H2O = tRNA(Ala) + glycine + H(+). D-aminoacyl-tRNA deacylase with broad substrate specificity. By recycling D-aminoacyl-tRNA to D-amino acids and free tRNA molecules, this enzyme counteracts the toxicity associated with the formation of D-aminoacyl-tRNA entities in vivo. This Halorubrum lacusprofundi (strain ATCC 49239 / DSM 5036 / JCM 8891 / ACAM 34) protein is D-aminoacyl-tRNA deacylase.